A 386-amino-acid chain; its full sequence is Protein-glutamate methylesterase/protein-glutamine glutaminase 3 (386 aa).

The region spanning 4–121 (KVLVVDDSGF…SRNPQKVKQL (118 aa)) is the Response regulatory domain. 4-aspartylphosphate is present on Asp55. Positions 132-194 (SNRRSSGFGS…SHAPAHPTTS (63 aa)) are enriched in low complexity. Positions 132–197 (SNRRSSGFGS…PAHPTTSGTA (66 aa)) are disordered. The CheB-type methylesterase domain maps to 191–383 (PTTSGTAKRK…LDDIGRHLVE (193 aa)). Catalysis depends on residues Ser210, His237, and Asp330.

This sequence belongs to the CheB family. Post-translationally, phosphorylated by CheA. Phosphorylation of the N-terminal regulatory domain activates the methylesterase activity.

The protein resides in the cytoplasm. It catalyses the reaction [protein]-L-glutamate 5-O-methyl ester + H2O = L-glutamyl-[protein] + methanol + H(+). It carries out the reaction L-glutaminyl-[protein] + H2O = L-glutamyl-[protein] + NH4(+). In terms of biological role, involved in chemotaxis. Part of a chemotaxis signal transduction system that modulates chemotaxis in response to various stimuli. Catalyzes the demethylation of specific methylglutamate residues introduced into the chemoreceptors (methyl-accepting chemotaxis proteins or MCP) by CheR. Also mediates the irreversible deamidation of specific glutamine residues to glutamic acid. The polypeptide is Protein-glutamate methylesterase/protein-glutamine glutaminase 3 (Pseudomonas syringae pv. syringae (strain B728a)).